The primary structure comprises 473 residues: Serine/threonine-protein phosphatase T (473 aa).

3 TPR repeats span residues 5–38, 40–72, and 73–106; these read ALEL…DSTN, ILYS…DPEY, and AKAY…APSD. The catalytic stretch occupies residues 159 to 472; that stretch reads KQITKEFVED…MAYANGLLSG (314 aa). Mn(2+) is bound by residues Asp-217, His-219, Asp-246, and Asn-278. Residue His-279 is the Proton donor/acceptor of the active site. Residues His-327 and His-404 each coordinate Mn(2+).

It belongs to the PPP phosphatase family. PP-5 (PP-T) subfamily. It depends on Mg(2+) as a cofactor. Mn(2+) serves as cofactor.

It is found in the nucleus. It catalyses the reaction O-phospho-L-seryl-[protein] + H2O = L-seryl-[protein] + phosphate. The enzyme catalyses O-phospho-L-threonyl-[protein] + H2O = L-threonyl-[protein] + phosphate. Protein phosphatase that specifically binds to and dephosphorylates the molecular chaperone Hsp90. Dephosphorylation positively regulates the Hsp90 chaperone machinery. The polypeptide is Serine/threonine-protein phosphatase T (ppt1) (Schizosaccharomyces pombe (strain 972 / ATCC 24843) (Fission yeast)).